Reading from the N-terminus, the 854-residue chain is DNA mismatch repair protein MutS (854 aa).

616 to 623 (GPNMGGKS) is a binding site for ATP.

The protein belongs to the DNA mismatch repair MutS family.

Its function is as follows. This protein is involved in the repair of mismatches in DNA. It is possible that it carries out the mismatch recognition step. This protein has a weak ATPase activity. This chain is DNA mismatch repair protein MutS, found in Pectobacterium atrosepticum (strain SCRI 1043 / ATCC BAA-672) (Erwinia carotovora subsp. atroseptica).